The chain runs to 326 residues: Adenosine receptor A1 (326 aa).

Residues 1–10 (MPPSISAFQA) are Extracellular-facing. The helical transmembrane segment at 11 to 33 (AYIGIEVLIALVSVPGNVLVIWA) threads the bilayer. At 34–46 (VKVNQALRDATFC) the chain is on the cytoplasmic side. A helical transmembrane segment spans residues 47–69 (FIVSLAVADVAVGALVIPLAILI). The Extracellular segment spans residues 70–80 (NIGPQTYFHTC). An intrachain disulfide couples Cys80 to Cys169. Residues 81 to 102 (LMVACPVLILTQSSILALLAIA) form a helical membrane-spanning segment. Topologically, residues 103–123 (VDRYLRVKIPLRYKMVVTPRR) are cytoplasmic. A helical membrane pass occupies residues 124–146 (AAVAIAGCWILSFVVGLTPMFGW). The Extracellular portion of the chain corresponds to 147–176 (NNLSAVERAWAANGSMGEPVIKCEFEKVIS). A glycan (N-linked (GlcNAc...) asparagine) is linked at Asn159. The chain crosses the membrane as a helical span at residues 177–201 (MEYMVYFNFFVWVLPPLLLMVLIYL). At 202–235 (EVFYLIRKQLNKKVSASSGDPQKYYGKELKIAKS) the chain is on the cytoplasmic side. A helical transmembrane segment spans residues 236–259 (LALILFLFALSWLPLHILNCITLF). The Extracellular segment spans residues 260-267 (CPSCHKPS). Residues 268 to 292 (ILTYIAIFLTHGNSAMNPIVYAFRI) form a helical membrane-spanning segment. Residues 293–326 (QKFRVTFLKIWNDHFRCQPAPPIDEDLPEERPDD) are Cytoplasmic-facing. The S-palmitoyl cysteine moiety is linked to residue Cys309.

Belongs to the G-protein coupled receptor 1 family.

It is found in the cell membrane. Receptor for adenosine. The activity of this receptor is mediated by G proteins which inhibit adenylyl cyclase. The protein is Adenosine receptor A1 (ADORA1) of Homo sapiens (Human).